The following is a 127-amino-acid chain: Large ribosomal subunit protein bL20 (127 aa).

The protein belongs to the bacterial ribosomal protein bL20 family.

Functionally, binds directly to 23S ribosomal RNA and is necessary for the in vitro assembly process of the 50S ribosomal subunit. It is not involved in the protein synthesizing functions of that subunit. This is Large ribosomal subunit protein bL20 from Corynebacterium aurimucosum (strain ATCC 700975 / DSM 44827 / CIP 107346 / CN-1) (Corynebacterium nigricans).